A 346-amino-acid polypeptide reads, in one-letter code: Free fatty acid receptor 3 (346 aa).

At 1 to 19 (MDTGPDQSYFSGNHWFVFS) the chain is on the extracellular side. A helical transmembrane segment spans residues 20–40 (VYLLTFLVGLPLNLLALVVFV). Residues 41–47 (GKLQRRP) are Cytoplasmic-facing. The helical transmembrane segment at 48-68 (VAVDVLLLNLTASDLLLLLFL) threads the bilayer. Over 69 to 88 (PFRMVEAANGMHWPLPFILC) the chain is Extracellular. Cys88 and Cys169 are joined by a disulfide. A helical membrane pass occupies residues 89 to 111 (PLSGFIFFTTIYLTALFLAAVSI). Over 112 to 132 (ERFLSVAHPLWYKTRPRLGQA) the chain is Cytoplasmic. Residues 133–153 (GLVSVACWLLASAHCSVVYVI) form a helical membrane-spanning segment. At 154-178 (EFSGDISHSQGTNGTCYLEFRKDQL) the chain is on the extracellular side. Asn166 carries N-linked (GlcNAc...) asparagine glycosylation. Residues 179 to 199 (AILLPVRLEMAVVLFVVPLII) form a helical membrane-spanning segment. At 200–222 (TSYCYSRLVWILGRGGSHRRQRR) the chain is on the cytoplasmic side. Residues 223–243 (VAGLLAATLLNFLVCFGPYNV) form a helical membrane-spanning segment. Topologically, residues 244 to 258 (SHVVGYICGESPAWR) are extracellular. The helical transmembrane segment at 259–279 (IYVTLLSTLNSCVDPFVYYFS) threads the bilayer. The Cytoplasmic portion of the chain corresponds to 280–346 (SSGFQADFHE…TGGQVACAES (67 aa)). Residues 307-330 (MELKEQKGGEEQRADRPAERKTSE) are compositionally biased toward basic and acidic residues. The segment at 307 to 346 (MELKEQKGGEEQRADRPAERKTSEHSQGCGTGGQVACAES) is disordered.

It belongs to the G-protein coupled receptor 1 family. In terms of tissue distribution, highest level in adipose tissue, and lower expression across all tissues tested. Expressed in sympathetic ganglia.

Its subcellular location is the cell membrane. G protein-coupled receptor that is activated by a major product of dietary fiber digestion, the short chain fatty acids (SCFAs), and that plays a role in the regulation of whole-body energy homeostasis and in intestinal immunity. In omnivorous mammals, the short chain fatty acids acetate, propionate and butyrate are produced primarily by the gut microbiome that metabolizes dietary fibers. SCFAs serve as a source of energy but also act as signaling molecules. That G protein-coupled receptor is probably coupled to the pertussis toxin-sensitive, G(i/o)-alpha family of G proteins. Its activation results in the formation of inositol 1,4,5-trisphosphate, the mobilization of intracellular calcium, the phosphorylation of the MAPK3/ERK1 and MAPK1/ERK2 kinases and the inhibition of intracellular cAMP accumulation. Activated by SCFAs and by beta-hydroxybutyrate, a ketone body produced by the liver upon starvation, it inhibits N-type calcium channels and modulates the activity of sympathetic neurons through a signaling cascade involving the beta and gamma subunits of its coupled G protein, phospholipase C and MAP kinases. Thereby, it may regulate energy expenditure through the control of the sympathetic nervous system that controls for instance heart rate. Upon activation by SCFAs accumulating in the intestine, it may also signal to the brain via neural circuits which in turn would regulate intestinal gluconeogenesis. May also control the production of hormones involved in whole-body energy homeostasis. May for instance, regulate blood pressure through renin secretion. May also regulate secretion of the PYY peptide by enteroendocrine cells and control gut motility, intestinal transit rate, and the harvesting of energy from SCFAs produced by gut microbiota. May also indirectly regulate the production of LEP/Leptin, a hormone acting on the CNS to inhibit food intake, in response to the presence of short-chain fatty acids in the intestine. Finally, may also play a role in glucose homeostasis. Besides its role in energy homeostasis, may play a role in intestinal immunity. May mediate the activation of the inflammatory and immune response by SCFAs in the gut, regulating the rapid production of chemokines and cytokines by intestinal epithelial cells. Among SCFAs, the fatty acids containing less than 6 carbons, the most potent activators are probably propionate, butyrate and pentanoate while acetate is a poor activator. The chain is Free fatty acid receptor 3 (FFAR3) from Homo sapiens (Human).